The following is a 77-amino-acid chain: Conotoxin PnMKLT1-0122 (77 aa).

Residues 1–22 (MKLTCMMIVAVLFLTAWTFATA) form the signal peptide. The propeptide occupies 23-49 (EDPRNGLENLFSKAHHEMKNPEDSKLN). Cystine bridges form between Cys-52–Cys-67, Cys-59–Cys-71, and Cys-66–Cys-76.

This sequence belongs to the conotoxin O1 superfamily. As to expression, expressed by the venom duct.

It is found in the secreted. This is Conotoxin PnMKLT1-0122 from Conus pennaceus (Feathered cone).